Reading from the N-terminus, the 281-residue chain is DegV domain-containing protein CA_C0948 (281 aa).

The region spanning 4 to 280 (IAIITDTTAD…PGLVGLVLLE (277 aa)) is the DegV domain. Ser60 and Ser93 together coordinate hexadecanoate.

In terms of biological role, may bind long-chain fatty acids, such as palmitate, and may play a role in lipid transport or fatty acid metabolism. This chain is DegV domain-containing protein CA_C0948, found in Clostridium acetobutylicum (strain ATCC 824 / DSM 792 / JCM 1419 / IAM 19013 / LMG 5710 / NBRC 13948 / NRRL B-527 / VKM B-1787 / 2291 / W).